Consider the following 174-residue polypeptide: ATP-dependent protease subunit HslV (174 aa).

Thr2 is a catalytic residue. 3 residues coordinate Na(+): Gly157, Cys160, and Thr163.

Belongs to the peptidase T1B family. HslV subfamily. A double ring-shaped homohexamer of HslV is capped on each side by a ring-shaped HslU homohexamer. The assembly of the HslU/HslV complex is dependent on binding of ATP.

It localises to the cytoplasm. It carries out the reaction ATP-dependent cleavage of peptide bonds with broad specificity.. Allosterically activated by HslU binding. Its function is as follows. Protease subunit of a proteasome-like degradation complex believed to be a general protein degrading machinery. This chain is ATP-dependent protease subunit HslV, found in Shewanella sediminis (strain HAW-EB3).